Here is an 816-residue protein sequence, read N- to C-terminus: Phosphatidylinositol 4-kinase beta (816 aa).

The interval 1-30 (MGDTVVEPTPLKPTSESTPGPAGSNGGSLL) is disordered. An N-acetylglycine modification is found at glycine 2. An interaction with ACBD3 region spans residues 2 to 68 (GDTVVEPTPL…VKLLHGGVAI (67 aa)). Positions 52–242 (CQEVLEKVKL…GTKLRKLILS (191 aa)) constitute a PIK helical domain. The segment at 248 to 318 (AHRKRELPSL…TESIDNSFSS (71 aa)) is disordered. Phosphoserine is present on serine 258. Residue threonine 263 is modified to Phosphothreonine. Serine 266, serine 275, serine 277, serine 284, and serine 294 each carry phosphoserine. Composition is skewed to polar residues over residues 278-297 (DATA…SNPK) and 306-318 (SSST…SFSS). At serine 428 the chain carries Phosphoserine. Phosphothreonine is present on threonine 438. Serine 511 is modified (phosphoserine). Threonine 517 and threonine 519 each carry phosphothreonine. A PI3K/PI4K catalytic domain is found at 535 to 801 (EPWQEKVRRI…MVDGSMRSIT (267 aa)). The segment at 541–547 (VRRIREG) is G-loop. Residues 668–676 (QVKDRHNGN) are catalytic loop. Residues 687–711 (HIDFGFILSSSPRNLGFETSAFKLT) form an activation loop region.

This sequence belongs to the PI3/PI4-kinase family. Type III PI4K subfamily. Interacts with ARF1 and ARF3 in the Golgi complex, but not with ARF4, ARF5 or ARF6. Interacts with NCS1/FREQ in a calcium-independent manner. Interacts with CALN1/CABP8 and CALN2/CABP7; in a calcium-dependent manner; this interaction competes with NCS1/FREQ binding. Interacts with ACBD3. Interacts with ARMH3, YWHAB, YWHAE, YWHAG, YWHAH, YWHAQ, YWHAZ and SFN. Interacts with GGA2 (via VHS domain); the interaction is important for PI4KB location at the Golgi apparatus membrane. Interacts with ATG9A. The cofactor is Mg(2+). Mn(2+) serves as cofactor.

The protein localises to the endomembrane system. The protein resides in the mitochondrion outer membrane. It is found in the rough endoplasmic reticulum membrane. Its subcellular location is the golgi apparatus. It localises to the golgi apparatus membrane. It carries out the reaction a 1,2-diacyl-sn-glycero-3-phospho-(1D-myo-inositol) + ATP = a 1,2-diacyl-sn-glycero-3-phospho-(1D-myo-inositol 4-phosphate) + ADP + H(+). With respect to regulation, inhibited by wortmannin. Increased kinase activity upon interaction with NCS1/FREQ. Its function is as follows. Phosphorylates phosphatidylinositol (PI) in the first committed step in the production of the second messenger inositol-1,4,5,-trisphosphate (PIP). May regulate Golgi disintegration/reorganization during mitosis, possibly via its phosphorylation. Involved in Golgi-to-plasma membrane trafficking. May play an important role in the inner ear development. The protein is Phosphatidylinositol 4-kinase beta (PI4KB) of Otolemur garnettii (Small-eared galago).